Here is a 188-residue protein sequence, read N- to C-terminus: Elongation factor P-like protein (188 aa).

Belongs to the elongation factor P family.

The polypeptide is Elongation factor P-like protein (Stenotrophomonas maltophilia (strain R551-3)).